The sequence spans 379 residues: MSQNTSVGIVTPQKIPFEMPLVLENGKTLPRFDLMIETYGELNAEKNNAVLICHALSGNHHVAGRHSAEDKYTGWWDNMVGPGKPIDTERFFVVGLNNLGGCDGSSGPLSINPETGREYGADFPMVTVKDWVKSQAALADYLGIEQWAAVVGGSLGGMQALQWAISYPERVRHALVIASAPKLSAQNIAFNDVARQAILTDPDFNEGHYRSHNTVPARGLRIARMMGHITYLAEDGLGKKFGRDLRSNGYQYGYSVEFEVESYLRYQGDKFVGRFDANTYLLMTKALDYFDPAADFGNSLTRAVQDVQAKFFVASFSTDWRFAPERSHELVKALIAAQKSVQYIEVKSAHGHDAFLMEDEAYMRAVTAYMNNVDKDCRL.

The 310-residue stretch at 48-357 folds into the AB hydrolase-1 domain; sequence NAVLICHALS…SAHGHDAFLM (310 aa). Ser154 functions as the Nucleophile in the catalytic mechanism. Arg224 is a binding site for substrate. Residues Asp319 and His352 contribute to the active site. Position 353 (Asp353) interacts with substrate.

This sequence belongs to the AB hydrolase superfamily. MetX family. As to quaternary structure, homodimer.

The protein resides in the cytoplasm. It carries out the reaction L-homoserine + succinyl-CoA = O-succinyl-L-homoserine + CoA. Its pathway is amino-acid biosynthesis; L-methionine biosynthesis via de novo pathway; O-succinyl-L-homoserine from L-homoserine: step 1/1. In terms of biological role, transfers a succinyl group from succinyl-CoA to L-homoserine, forming succinyl-L-homoserine. The polypeptide is Homoserine O-succinyltransferase (Neisseria gonorrhoeae (strain ATCC 700825 / FA 1090)).